The chain runs to 130 residues: Large ribosomal subunit protein bL21 (130 aa).

A disordered region spans residues 110–130 (KTAAQPAADEAVAANEVDSEA). The segment covering 112 to 130 (AAQPAADEAVAANEVDSEA) has biased composition (low complexity).

Belongs to the bacterial ribosomal protein bL21 family. Part of the 50S ribosomal subunit. Contacts protein L20.

In terms of biological role, this protein binds to 23S rRNA in the presence of protein L20. The sequence is that of Large ribosomal subunit protein bL21 from Cyanothece sp. (strain PCC 7425 / ATCC 29141).